We begin with the raw amino-acid sequence, 236 residues long: 2,3,4,5-tetrahydropyridine-2,6-dicarboxylate N-acetyltransferase (236 aa).

It belongs to the transferase hexapeptide repeat family. DapH subfamily.

It catalyses the reaction (S)-2,3,4,5-tetrahydrodipicolinate + acetyl-CoA + H2O = L-2-acetamido-6-oxoheptanedioate + CoA. It participates in amino-acid biosynthesis; L-lysine biosynthesis via DAP pathway; LL-2,6-diaminopimelate from (S)-tetrahydrodipicolinate (acetylase route): step 1/3. Functionally, catalyzes the transfer of an acetyl group from acetyl-CoA to tetrahydrodipicolinate. The sequence is that of 2,3,4,5-tetrahydropyridine-2,6-dicarboxylate N-acetyltransferase from Lactiplantibacillus plantarum (strain ATCC BAA-793 / NCIMB 8826 / WCFS1) (Lactobacillus plantarum).